A 101-amino-acid polypeptide reads, in one-letter code: Integration host factor subunit beta (101 aa).

The disordered stretch occupies residues 57-101 (PARAGRNPRTGAHVPVDQKSVPFFKTGKEMRERLNRDHPDPGAAD). Over residues 82-101 (TGKEMRERLNRDHPDPGAAD) the composition is skewed to basic and acidic residues.

Belongs to the bacterial histone-like protein family. Heterodimer of an alpha and a beta chain.

Its function is as follows. This protein is one of the two subunits of integration host factor, a specific DNA-binding protein that functions in genetic recombination as well as in transcriptional and translational control. The protein is Integration host factor subunit beta of Bradyrhizobium diazoefficiens (strain JCM 10833 / BCRC 13528 / IAM 13628 / NBRC 14792 / USDA 110).